Consider the following 313-residue polypeptide: Ethylene-responsive transcription factor ERN2 (313 aa).

Over residues 1–10 the composition is skewed to basic and acidic residues; it reads MEIQFDEPKK. Residues 1 to 29 are disordered; that stretch reads MEIQFDEPKKSLRPKKVNKFKGRNKKSET. Residues 11–24 are compositionally biased toward basic residues; sequence SLRPKKVNKFKGRN. Residues 32 to 89 constitute a DNA-binding region (AP2/ERF); that stretch reads KFVGVRQRPSGRYVAEIKDTTQNIRMWLGTFETAEEAARAYDEAATLLRGSKTRTNFV. Disordered regions lie at residues 108–143 and 157–204; these read NRKKGTKQQDMNGISSTTSHADTTNDTTSDGSTSST and TSAS…SSST. Composition is skewed to low complexity over residues 122–143 and 157–193; these read SSTTSHADTTNDTTSDGSTSST and TSASGVTSTSTNISTSASGVASTSTDISTNSSNTNVN.

This sequence belongs to the AP2/ERF transcription factor family. ERF subfamily. In terms of tissue distribution, expressed in roots, root hairs and leaves. Expressed in root epidermis and root hairs.

It localises to the nucleus. In terms of biological role, transcription factor involved in symbiotic nodule signaling in response to rhizobial Nod factors (NFs). Binds to the GCC box (NF-responsive box) of ENOD11 promoter. Acts as a transcriptional activator of NF-responsive box-containing target gene promoters in root hairs. Involved in early stages of root nodule development. Functions redundantly with ERN1. Is essential with ERN1 for the initiation of root hair infection, and nodule organogenesis and development. Required for accurate expression of the NF signaling genes ENOD11 and ENOD12. The polypeptide is Ethylene-responsive transcription factor ERN2 (Medicago truncatula (Barrel medic)).